The chain runs to 427 residues: Glutamate-1-semialdehyde 2,1-aminomutase (427 aa).

Lys265 is subject to N6-(pyridoxal phosphate)lysine.

Belongs to the class-III pyridoxal-phosphate-dependent aminotransferase family. HemL subfamily. Homodimer. Requires pyridoxal 5'-phosphate as cofactor.

It localises to the cytoplasm. The catalysed reaction is (S)-4-amino-5-oxopentanoate = 5-aminolevulinate. It participates in porphyrin-containing compound metabolism; protoporphyrin-IX biosynthesis; 5-aminolevulinate from L-glutamyl-tRNA(Glu): step 2/2. The sequence is that of Glutamate-1-semialdehyde 2,1-aminomutase from Edwardsiella ictaluri (strain 93-146).